Here is a 481-residue protein sequence, read N- to C-terminus: Inosine-5'-monophosphate dehydrogenase (481 aa).

CBS domains are found at residues Val92 to Val148 and Met152 to Asn209. NAD(+) is bound by residues Asp244 and Gly293 to Gly295. 2 residues coordinate K(+): Gly295 and Gly297. Residue Ser298 participates in IMP binding. Residue Cys300 participates in K(+) binding. Residue Cys300 is the Thioimidate intermediate of the active site. Residues Asp333–Gly335, Gly356–Ser357, and Tyr380–Gly384 contribute to the IMP site. Arg396 functions as the Proton acceptor in the catalytic mechanism. Glu410 is a binding site for IMP. 3 residues coordinate K(+): Glu464, Ser465, and His466.

Belongs to the IMPDH/GMPR family. As to quaternary structure, homotetramer. K(+) is required as a cofactor.

It carries out the reaction IMP + NAD(+) + H2O = XMP + NADH + H(+). The protein operates within purine metabolism; XMP biosynthesis via de novo pathway; XMP from IMP: step 1/1. With respect to regulation, mycophenolic acid (MPA) is a non-competitive inhibitor that prevents formation of the closed enzyme conformation by binding to the same site as the amobile flap. In contrast, mizoribine monophosphate (MZP) is a competitive inhibitor that induces the closed conformation. MPA is a potent inhibitor of mammalian IMPDHs but a poor inhibitor of the bacterial enzymes. MZP is a more potent inhibitor of bacterial IMPDH. In terms of biological role, catalyzes the conversion of inosine 5'-phosphate (IMP) to xanthosine 5'-phosphate (XMP), the first committed and rate-limiting step in the de novo synthesis of guanine nucleotides, and therefore plays an important role in the regulation of cell growth. The chain is Inosine-5'-monophosphate dehydrogenase from Helicobacter pylori (strain J99 / ATCC 700824) (Campylobacter pylori J99).